Here is a 325-residue protein sequence, read N- to C-terminus: DNA-directed RNA polymerase subunit alpha (325 aa).

Positions 1–231 (MQTSLLKPKI…DQLSVFAALE (231 aa)) are alpha N-terminal domain (alpha-NTD). An alpha C-terminal domain (alpha-CTD) region spans residues 246 to 325 (IDPILLRPVD…ENWPPAGLDK (80 aa)).

It belongs to the RNA polymerase alpha chain family. As to quaternary structure, homodimer. The RNAP catalytic core consists of 2 alpha, 1 beta, 1 beta' and 1 omega subunit. When a sigma factor is associated with the core the holoenzyme is formed, which can initiate transcription.

The enzyme catalyses RNA(n) + a ribonucleoside 5'-triphosphate = RNA(n+1) + diphosphate. DNA-dependent RNA polymerase catalyzes the transcription of DNA into RNA using the four ribonucleoside triphosphates as substrates. This Burkholderia thailandensis (strain ATCC 700388 / DSM 13276 / CCUG 48851 / CIP 106301 / E264) protein is DNA-directed RNA polymerase subunit alpha.